A 449-amino-acid polypeptide reads, in one-letter code: Required for meiotic nuclear division protein 1 homolog (449 aa).

The transit peptide at 1 to 12 (MPATLLRAVARS) directs the protein to the mitochondrion.

It belongs to the RMD1/sif2 family. Homooligomer.

The protein localises to the mitochondrion. In terms of biological role, required for mitochondrial translation, possibly by coordinating the assembly or maintenance of the mitochondrial ribosome. This is Required for meiotic nuclear division protein 1 homolog (RMND1) from Homo sapiens (Human).